A 441-amino-acid polypeptide reads, in one-letter code: Transcriptional regulatory protein ZraR (441 aa).

Residues Asp-7–Leu-121 enclose the Response regulatory domain. The residue at position 56 (Asp-56) is a 4-aspartylphosphate. One can recognise a Sigma-54 factor interaction domain in the interval Met-141–Val-370. ATP is bound by residues Gly-172, Thr-173, Arg-329, and Arg-359. The segment at residues Lys-421–Ser-440 is a DNA-binding region (H-T-H motif).

Monomer. Phosphorylated by ZraS.

The protein localises to the cytoplasm. Its activity is regulated as follows. Activity of the ZraS/ZraR two-component system is repressed by the zinc-bound form of ZraP, which probably interacts with the periplasmic region of ZraS. In terms of biological role, part of the Zra signaling pathway, an envelope stress response (ESR) system composed of the periplasmic accessory protein ZraP, the histidine kinase ZraS and the transcriptional regulator ZraR. The ZraPSR system contributes to antibiotic resistance and is important for membrane integrity in the presence of membrane-targeting biocides. ZraR is a member of the two-component regulatory system ZraS/ZraR. When activated by ZraS, acts in conjunction with sigma-54 to regulate the expression of zraP in the presence of high Zn(2+) or Pb(2+) concentrations. Also positively autoregulates the expression of the zraSR operon. Binds to a region within the zraP-zraSR intergenic region that is characterized by two inverted repeats separated by a 14 bp spacer. In addition, controls a regulon of genes of diverse functions that may be critical to maintain envelope integrity and cell survival under stressful conditions. The system has no direct role in zinc or copper resistance. This Escherichia coli (strain K12) protein is Transcriptional regulatory protein ZraR.